A 160-amino-acid chain; its full sequence is uncharacterized protein (160 aa).

A helical transmembrane segment spans residues 8–28 (LLFILVFISGFILFTVYSYTA).

The protein resides in the membrane. This is an uncharacterized protein from Escherichia coli (strain K12).